The following is a 599-amino-acid chain: Elongation factor 4 (599 aa).

Residues 5–187 (SHIRNFSIIA…RLVTTIPAPT (183 aa)) form the tr-type G domain. GTP-binding positions include 17 to 22 (DHGKST) and 134 to 137 (NKID).

It belongs to the TRAFAC class translation factor GTPase superfamily. Classic translation factor GTPase family. LepA subfamily.

It is found in the cell inner membrane. It carries out the reaction GTP + H2O = GDP + phosphate + H(+). Required for accurate and efficient protein synthesis under certain stress conditions. May act as a fidelity factor of the translation reaction, by catalyzing a one-codon backward translocation of tRNAs on improperly translocated ribosomes. Back-translocation proceeds from a post-translocation (POST) complex to a pre-translocation (PRE) complex, thus giving elongation factor G a second chance to translocate the tRNAs correctly. Binds to ribosomes in a GTP-dependent manner. This is Elongation factor 4 from Pseudomonas fluorescens (strain ATCC BAA-477 / NRRL B-23932 / Pf-5).